A 315-amino-acid chain; its full sequence is Aspartate carbamoyltransferase catalytic subunit (315 aa).

Carbamoyl phosphate contacts are provided by Arg65 and Thr66. An L-aspartate-binding site is contributed by Lys93. Residues Arg115, His145, and Gln148 each coordinate carbamoyl phosphate. L-aspartate contacts are provided by Arg179 and Arg234. Carbamoyl phosphate contacts are provided by Gly275 and Pro276.

The protein belongs to the aspartate/ornithine carbamoyltransferase superfamily. ATCase family. Heterododecamer (2C3:3R2) of six catalytic PyrB chains organized as two trimers (C3), and six regulatory PyrI chains organized as three dimers (R2).

The enzyme catalyses carbamoyl phosphate + L-aspartate = N-carbamoyl-L-aspartate + phosphate + H(+). The protein operates within pyrimidine metabolism; UMP biosynthesis via de novo pathway; (S)-dihydroorotate from bicarbonate: step 2/3. In terms of biological role, catalyzes the condensation of carbamoyl phosphate and aspartate to form carbamoyl aspartate and inorganic phosphate, the committed step in the de novo pyrimidine nucleotide biosynthesis pathway. This is Aspartate carbamoyltransferase catalytic subunit from Xanthomonas campestris pv. campestris (strain 8004).